We begin with the raw amino-acid sequence, 1386 residues long: X-linked retinitis pigmentosa GTPase regulator homolog (1386 aa).

3 disordered regions span residues 1-25 (MFFKRSTNSRKTSANSSSDTSTSSE), 37-56 (AGARSQKGSVHRQSGKKARR), and 730-760 (MPQMNAKSKRSDSVTNGAPTLPPPAPKPEQH). Positions 9–25 (SRKTSANSSSDTSTSSE) are enriched in low complexity. Over residues 45-56 (SVHRQSGKKARR) the composition is skewed to basic residues. RCC1 repeat units lie at residues 737-787 (SKRS…VLSS), 788-838 (SGQL…FICS), 839-891 (DGSL…VLTD), and 893-943 (GRVL…CITE). A disordered region spans residues 972 to 994 (LKNTEDPSSPSPSTNGSTPRVNL). 2 RCC1 repeats span residues 1034–1085 (EGTL…ASTD) and 1087–1139 (GSVF…FVQK).

Functionally, could be a guanine-nucleotide releasing factor for glo-1. May play a role in gut granule biogenesis. Regulates axon termination in PLM and ALM neurons. The polypeptide is X-linked retinitis pigmentosa GTPase regulator homolog (glo-4) (Caenorhabditis elegans).